A 164-amino-acid polypeptide reads, in one-letter code: FMN reductase (NADH) RutF (164 aa).

Belongs to the non-flavoprotein flavin reductase family. RutF subfamily.

It carries out the reaction FMNH2 + NAD(+) = FMN + NADH + 2 H(+). Catalyzes the reduction of FMN to FMNH2 which is used to reduce pyrimidine by RutA via the Rut pathway. This is FMN reductase (NADH) RutF from Escherichia coli O150:H5 (strain SE15).